The primary structure comprises 62 residues: Photosystem II reaction center protein Z (62 aa).

A run of 2 helical transmembrane segments spans residues 8–28 and 41–61; these read AVFASIAIPFIPVIGVPAVFA and FSGATPRIGPVPLVGILNSSV.

This sequence belongs to the PsbZ family. In terms of assembly, PSII is composed of 1 copy each of membrane proteins PsbA, PsbB, PsbC, PsbD, PsbE, PsbF, PsbH, PsbI, PsbJ, PsbK, PsbL, PsbM, PsbT, PsbY, PsbZ, Psb30/Ycf12, at least 3 peripheral proteins of the oxygen-evolving complex and a large number of cofactors. It forms dimeric complexes.

The protein resides in the plastid. It localises to the chloroplast thylakoid membrane. In terms of biological role, may control the interaction of photosystem II (PSII) cores with the light-harvesting antenna, regulates electron flow through the 2 photosystem reaction centers. PSII is a light-driven water plastoquinone oxidoreductase, using light energy to abstract electrons from H(2)O, generating a proton gradient subsequently used for ATP formation. The protein is Photosystem II reaction center protein Z of Selaginella uncinata (Blue spike-moss).